The sequence spans 354 residues: G-protein coupled receptor homolog US28 (354 aa).

At 1 to 37 (MTPTTTTAELTTEFDYDEDATPCVFTDVLNQSKPVTL) the chain is on the extracellular side. The N-linked (GlcNAc...) asparagine; by host glycan is linked to Asn-30. A helical transmembrane segment spans residues 38-58 (FLYGVVFLFGSIGNFLVIFTI). The Cytoplasmic segment spans residues 59–69 (TWRRRIQCSGD). Residues 70–90 (VYFINLAAADLLFVCTLPLWM) form a helical membrane-spanning segment. Residues 91-101 (QYLLDHNSLAS) are Extracellular-facing. A helical transmembrane segment spans residues 102–122 (VPCTLLTACFYVAMFASLCFI). Residues 123 to 145 (TEIALDRYYAIVYMRYRPVKQAC) are Cytoplasmic-facing. The helical transmembrane segment at 146 to 166 (LFSIFWWIFAVIIAIPHFMVV) threads the bilayer. The Extracellular portion of the chain corresponds to 167–183 (TKKDNQCMTDYDYLEVS). A helical membrane pass occupies residues 184 to 204 (YPIILNVELMLGAFVIPLSVI). At 205–228 (SYCYYRISRIVAVSQSRHKGRIVR) the chain is on the cytoplasmic side. The helical transmembrane segment at 229-249 (VLIAVVLVFIIFWLPYHLTLF) threads the bilayer. Residues 250–273 (VDTLKLLKWISSSCEFERSLKRAL) lie on the Extracellular side of the membrane. The helical transmembrane segment at 274–294 (ILTESLAFCHCCLNPLLYVFV) threads the bilayer. The Cytoplasmic segment spans residues 295-354 (GTKFRQELHCLLAEFRQRLFSRDVSWYHSMSFSRRSSPSRRETSSDTLSDEVCRVSQIIP).

Belongs to the G-protein coupled receptor 1 family. In terms of assembly, interacts with host GPRASP1; this interaction targets US28 to lysosomes for degradation. Interacts with host CX3CL1/Fractalkine (via N-terminus). Interacts with host Gi alpha-1 subunit GNAI1; this interaction does not lead to the catalytic activation of Gi complex. Post-translationally, phosphorylated. High phosphorylation occurs concomitantly with receptor endocytosis and correlate with low receptor presence at the plasma membrane.

Its subcellular location is the host cell membrane. Binds to a great number of different CC-chemokines including CCL5/RANTES, CCL2/MCP-1, CCL3/MIP-1-alpha as well as CX3CL1/Fractalkine. Transduces signals resulting in the activation of MAP kinase signaling pathways and augmentation of intracellular calcium ion levels, leading to alterations in chemotactic behavior of vascular smooth muscle cells and macrophages. The US28 receptor also exhibits high levels of agonist-independent signaling activity and agonist-independent endocytosis. Interacts with the host Gi complex without activating it, thereby probably interfering with the chemokine-Gi signaling. May also function as a G protein sink to sequester G protein from the cell surface via internalization. Interacts with endogenous Gaq/11 subunits and thereby constitutively activates phospholipase C. This Homo sapiens (Human) protein is G-protein coupled receptor homolog US28 (US28).